The following is a 126-amino-acid chain: Fluoride-specific ion channel FluC (126 aa).

The next 4 helical transmembrane spans lie at 6–26, 36–56, 69–89, and 99–119; these read FVAV…FAVL, YGTL…VGFF, LAIT…SEVV, and WAGL…AFGL. Positions 76 and 79 each coordinate Na(+).

This sequence belongs to the fluoride channel Fluc/FEX (TC 1.A.43) family.

It localises to the cell inner membrane. The enzyme catalyses fluoride(in) = fluoride(out). With respect to regulation, na(+) is not transported, but it plays an essential structural role and its presence is essential for fluoride channel function. Functionally, fluoride-specific ion channel. Important for reducing fluoride concentration in the cell, thus reducing its toxicity. This is Fluoride-specific ion channel FluC from Cupriavidus necator (strain ATCC 17699 / DSM 428 / KCTC 22496 / NCIMB 10442 / H16 / Stanier 337) (Ralstonia eutropha).